A 522-amino-acid chain; its full sequence is Proactivator polypeptide-like 1 (522 aa).

The N-terminal stretch at 1 to 17 is a signal peptide; sequence MLCALILWSGLLGAARA. A propeptide spanning residues 18–59 is cleaved from the precursor; it reads SPISVPRECAKGSEVWCQDLQAAAKCRAVRHCQSAVWNKPTV. One can recognise a Saposin A-type 1 domain in the interval 19–59; it reads PISVPRECAKGSEVWCQDLQAAAKCRAVRHCQSAVWNKPTV. Saposin B-type domains are found at residues 60–144, 183–261, 291–371, and 393–474; these read KSLP…EPLQ, EGAV…ERES, LGLT…GSKR, and QGSF…HGPK. 3 disulfides stabilise this stretch: Cys-64–Cys-140, Cys-67–Cys-134, and Cys-95–Cys-107. Positions 146-183 are excised as a propeptide; sequence HLAETTSERPLTQEDANEVMAPFLSNGALSFHPSQMPE. Disulfide bonds link Cys-187-Cys-257, Cys-190-Cys-251, and Cys-216-Cys-227. Asn-204 is a glycosylation site (N-linked (GlcNAc...) asparagine). A propeptide spanning residues 261–290 is cleaved from the precursor; the sequence is SAHWLTRVAAVDGVPSLEMEMPRTNELQMQ. Disulfide bonds link Cys-295-Cys-367, Cys-298-Cys-361, and Cys-326-Cys-337. N-linked (GlcNAc...) (high mannose) asparagine glycosylation is present at Asn-312. Residues 371-392 constitute a propeptide that is removed on maturation; the sequence is RRARSISRAVATTPSLPVDEEN. Disulfide bonds link Cys-397/Cys-470, Cys-400/Cys-464, and Cys-428/Cys-439. Residues 475 to 522 constitute a propeptide that is removed on maturation; the sequence is TPLLGTDQCVMGPSFWCKSPEAAEMCNALEHCQRLVWKKPVSKINEQP. The region spanning 476–516 is the Saposin A-type 2 domain; it reads PLLGTDQCVMGPSFWCKSPEAAEMCNALEHCQRLVWKKPVS.

Its subcellular location is the secreted. May activate the lysosomal degradation of sphingolipids. The sequence is that of Proactivator polypeptide-like 1 (Psapl1) from Mus musculus (Mouse).